We begin with the raw amino-acid sequence, 447 residues long: Voltage-gated purine nucleotide uniporter SLC17A9 (447 aa).

Positions 1-26 are disordered; it reads MPSQRSSLMQPIPEETRKTPSAAAED. Over residues 14-26 the composition is skewed to basic and acidic residues; sequence EETRKTPSAAAED. Transmembrane regions (helical) follow at residues 36-58, 74-94, 103-123, 129-149, 169-189, 197-217, 252-272, 287-307, 327-347, 380-400, and 413-433; these read LWTG…MPVC, GIVL…GGHL, VILL…LLAH, LAFV…YFPA, TVGA…SVLL, VFYF…KYLL, VWAV…LLSW, WVFN…SGFI, VMGL…TSFL, GFLF…GVCL, and CVFH…LVFG.

Belongs to the major facilitator superfamily. Sodium/anion cotransporter family.

It is found in the cytoplasmic vesicle. Its subcellular location is the secretory vesicle. The protein resides in the chromaffin granule membrane. It localises to the secretory vesicle membrane. The protein localises to the lysosome membrane. The catalysed reaction is ATP(in) = ATP(out). The enzyme catalyses ADP(in) = ADP(out). It carries out the reaction GTP(in) = GTP(out). With respect to regulation, activity is chloride-dependent. Functionally, voltage-gated ATP nucleotide uniporter that can also transport the purine nucleotides ADP and GTP. Uses the membrane potential as the driving force to control ATP accumulation in lysosomes and secretory vesicles. By controlling ATP storage in lysosomes, regulates ATP-dependent proteins of these organelles. Also indirectly regulates the exocytosis of ATP through its import into lysosomes in astrocytes and secretory vesicles such as adrenal chromaffin granules, mucin granules and synaptic vesicles. This Rattus norvegicus (Rat) protein is Voltage-gated purine nucleotide uniporter SLC17A9.